The sequence spans 492 residues: Ketol-acid reductoisomerase (NADP(+)) (492 aa).

Positions 15–208 constitute a KARI N-terminal Rossmann domain; sequence AQLGKCRFMA…GGHRAGVLES (194 aa). NADP(+)-binding positions include 45 to 48, Arg-68, Arg-76, Ser-78, and 108 to 110; these read CGAQ and DKQ. Residue His-132 is part of the active site. Gly-158 serves as a coordination point for NADP(+). KARI C-terminal knotted domains follow at residues 209–344 and 345–485; these read SFVA…NAPQ and FEGK…MTDM. The Mg(2+) site is built by Asp-217, Glu-221, Glu-389, and Glu-393. Position 414 (Ser-414) interacts with substrate.

This sequence belongs to the ketol-acid reductoisomerase family. Mg(2+) is required as a cofactor.

The enzyme catalyses (2R)-2,3-dihydroxy-3-methylbutanoate + NADP(+) = (2S)-2-acetolactate + NADPH + H(+). The catalysed reaction is (2R,3R)-2,3-dihydroxy-3-methylpentanoate + NADP(+) = (S)-2-ethyl-2-hydroxy-3-oxobutanoate + NADPH + H(+). Its pathway is amino-acid biosynthesis; L-isoleucine biosynthesis; L-isoleucine from 2-oxobutanoate: step 2/4. It participates in amino-acid biosynthesis; L-valine biosynthesis; L-valine from pyruvate: step 2/4. Its function is as follows. Involved in the biosynthesis of branched-chain amino acids (BCAA). Catalyzes an alkyl-migration followed by a ketol-acid reduction of (S)-2-acetolactate (S2AL) to yield (R)-2,3-dihydroxy-isovalerate. In the isomerase reaction, S2AL is rearranged via a Mg-dependent methyl migration to produce 3-hydroxy-3-methyl-2-ketobutyrate (HMKB). In the reductase reaction, this 2-ketoacid undergoes a metal-dependent reduction by NADPH to yield (R)-2,3-dihydroxy-isovalerate. The sequence is that of Ketol-acid reductoisomerase (NADP(+)) from Yersinia pseudotuberculosis serotype O:3 (strain YPIII).